A 267-amino-acid polypeptide reads, in one-letter code: L-erythrulose-1-phosphate isomerase (267 aa).

His95 serves as the catalytic Electrophile. Glu168 acts as the Proton acceptor in catalysis. Substrate is bound by residues Gly174 and Ser211.

Belongs to the triosephosphate isomerase family. As to quaternary structure, homodimer.

It localises to the cytoplasm. It catalyses the reaction L-erythrulose 1-phosphate = D-erythrulose 4-phosphate. It participates in carbohydrate metabolism; erythritol degradation. Catalyzes the isomerization of D-erythrulose-4P to L-erythrulose-1P. The polypeptide is L-erythrulose-1-phosphate isomerase (Rhizobium etli (strain ATCC 51251 / DSM 11541 / JCM 21823 / NBRC 15573 / CFN 42)).